The primary structure comprises 640 residues: Paramyosin, short form (640 aa).

Nonhelical region stretches follow at residues 1–122 (MALA…PDTV) and 420–640 (KLEQ…TITE). The stretch at 123-619 (VERSRQRRRR…IIRAKHRTFV (497 aa)) forms a coiled coil.

The protein belongs to the paramyosin family. Post-translationally, phosphorylated. In terms of tissue distribution, found in all adult muscle tissues except in indirect flight muscles and a set of temporary abdominal muscles. Not detected in larval muscle.

It localises to the cytoplasm. The protein resides in the myofibril. In terms of biological role, paramyosin is a major structural component of many thick filaments isolated from invertebrate muscles. This Drosophila melanogaster (Fruit fly) protein is Paramyosin, short form (Prm).